Here is a 184-residue protein sequence, read N- to C-terminus: Large ribosomal subunit protein uL6 (184 aa).

The protein belongs to the universal ribosomal protein uL6 family. As to quaternary structure, part of the 50S ribosomal subunit.

This protein binds to the 23S rRNA, and is important in its secondary structure. It is located near the subunit interface in the base of the L7/L12 stalk, and near the tRNA binding site of the peptidyltransferase center. This Thermotoga maritima (strain ATCC 43589 / DSM 3109 / JCM 10099 / NBRC 100826 / MSB8) protein is Large ribosomal subunit protein uL6.